The primary structure comprises 249 residues: MTRKLVLLRHGQSQWNLDNRFTGWVDVDLTEQGRQEAAAAGKLMKDEGLQFDVAYTSVLKRAIHTLQGALKELDQDWLPVHKSWRLNERHYGGLQGLDKAETAAKHGEEQVKIWRRSYDIPPPAMDVTDPGHPGHDRRYATLDRNALPGTESLATTLVRVLPYWHDAIAPQLKAGQTVLVTAHGNSLRALYKYLNDISNAQILELNIPTGIPLLFELDDNLQVQSYRYLGDPEAAKRAAEAVANQGKAK.

Residues 9 to 16 (RHGQSQWN), 22 to 23 (TG), Arg-61, 88 to 91 (ERHY), Lys-99, 115 to 116 (RR), and 184 to 185 (GN) each bind substrate. Residue His-10 is the Tele-phosphohistidine intermediate of the active site. Catalysis depends on Glu-88, which acts as the Proton donor/acceptor.

It belongs to the phosphoglycerate mutase family. BPG-dependent PGAM subfamily. Homodimer.

The enzyme catalyses (2R)-2-phosphoglycerate = (2R)-3-phosphoglycerate. Its pathway is carbohydrate degradation; glycolysis; pyruvate from D-glyceraldehyde 3-phosphate: step 3/5. Catalyzes the interconversion of 2-phosphoglycerate and 3-phosphoglycerate. This is 2,3-bisphosphoglycerate-dependent phosphoglycerate mutase from Xanthomonas campestris pv. campestris (strain 8004).